The sequence spans 162 residues: NADPH-dependent 7-cyano-7-deazaguanine reductase (162 aa).

Cys53 serves as the catalytic Thioimide intermediate. The active-site Proton donor is Asp60. Residues 75–77 (VES) and 94–95 (HE) contribute to the substrate site.

Belongs to the GTP cyclohydrolase I family. QueF type 1 subfamily.

It localises to the cytoplasm. It carries out the reaction 7-aminomethyl-7-carbaguanine + 2 NADP(+) = 7-cyano-7-deazaguanine + 2 NADPH + 3 H(+). It participates in tRNA modification; tRNA-queuosine biosynthesis. In terms of biological role, catalyzes the NADPH-dependent reduction of 7-cyano-7-deazaguanine (preQ0) to 7-aminomethyl-7-deazaguanine (preQ1). This is NADPH-dependent 7-cyano-7-deazaguanine reductase from Exiguobacterium sibiricum (strain DSM 17290 / CCUG 55495 / CIP 109462 / JCM 13490 / 255-15).